A 174-amino-acid polypeptide reads, in one-letter code: Bifunctional protein PyrR 2 (174 aa).

Residues 39–40, 100–108, and Arg-133 each bind substrate; these read TR and DDVLFTGRT. Positions 96–108 match the PRPP-binding motif; it reads VILVDDVLFTGRT.

The protein belongs to the purine/pyrimidine phosphoribosyltransferase family. PyrR subfamily. As to quaternary structure, homodimer and homohexamer; in equilibrium.

It catalyses the reaction UMP + diphosphate = 5-phospho-alpha-D-ribose 1-diphosphate + uracil. Regulates transcriptional attenuation of the pyrimidine nucleotide (pyr) operon by binding in a uridine-dependent manner to specific sites on pyr mRNA. This disrupts an antiterminator hairpin in the RNA and favors formation of a downstream transcription terminator, leading to a reduced expression of downstream genes. In terms of biological role, also displays a weak uracil phosphoribosyltransferase activity which is not physiologically significant. The chain is Bifunctional protein PyrR 2 (pyrR2) from Lactiplantibacillus plantarum (strain ATCC BAA-793 / NCIMB 8826 / WCFS1) (Lactobacillus plantarum).